A 530-amino-acid chain; its full sequence is Methionine--tRNA ligase (530 aa).

The short motif at 18-28 is the 'HIGH' region element; that stretch reads YYVNDVPHIGS. 4 residues coordinate Zn(2+): Cys133, Cys136, Cys151, and His154. The 'KMSKS' region signature appears at 307 to 311; it reads KMGKS. Lys310 provides a ligand contact to ATP.

Belongs to the class-I aminoacyl-tRNA synthetase family. MetG type 2A subfamily. As to quaternary structure, monomer. It depends on Zn(2+) as a cofactor.

The protein localises to the cytoplasm. It carries out the reaction tRNA(Met) + L-methionine + ATP = L-methionyl-tRNA(Met) + AMP + diphosphate. In terms of biological role, is required not only for elongation of protein synthesis but also for the initiation of all mRNA translation through initiator tRNA(fMet) aminoacylation. The polypeptide is Methionine--tRNA ligase (Nostoc sp. (strain PCC 7120 / SAG 25.82 / UTEX 2576)).